The following is a 332-amino-acid chain: MTSYKALGLVNTKDLFAKAVKGGYAIPAYNFNNLEQLQAIIQACVETRSPVILQVSSGARKYANATLLRNMARGAVEYAHELGVDIPIVLHLDHGDSLELCIDCIESGFSSVMIDGSALPYDENVALSRKVCEYAHARADYVTVEGELGVLAGVEDDVVAEKSHYTMPDEVEDFVKKTGVDSLAISIGTSHGRAKFTPEQCTRNADGVLIPPPLRFDILAEIEKRIPGFPIVLHGASSVPVEYVREVERYGGNLPDSVGIPEEQLRKAAKSAVCKVNIDSDGRLAMTAAIRRVLTTKVDEFDPRKYLGPARDELKKLYMHKNKEVLGSAGRA.

D-glyceraldehyde 3-phosphate is bound at residue Ser56. Asp93 acts as the Proton donor in catalysis. Zn(2+) contacts are provided by His94, Asp115, Glu147, and His191. Gly192 is a binding site for dihydroxyacetone phosphate. His234 contributes to the Zn(2+) binding site. Residues 235–237 and 277–280 each bind dihydroxyacetone phosphate; these read GAS and NIDS.

The protein belongs to the class II fructose-bisphosphate aldolase family. As to quaternary structure, homodimer. Requires Zn(2+) as cofactor.

The enzyme catalyses beta-D-fructose 1,6-bisphosphate = D-glyceraldehyde 3-phosphate + dihydroxyacetone phosphate. It participates in carbohydrate degradation; glycolysis; D-glyceraldehyde 3-phosphate and glycerone phosphate from D-glucose: step 4/4. Functionally, catalyzes the aldol condensation of dihydroxyacetone phosphate (DHAP or glycerone-phosphate) with glyceraldehyde 3-phosphate (G3P) to form fructose 1,6-bisphosphate (FBP) in gluconeogenesis and the reverse reaction in glycolysis. In Treponema pallidum (strain Nichols), this protein is Fructose-bisphosphate aldolase (fba).